The sequence spans 345 residues: Platelet-derived growth factor C (345 aa).

The first 22 residues, 1–22 (MSLFGLLLLTSALAGQRQGTQA), serve as a signal peptide directing secretion. Residues Asn-25 and Asn-55 are each glycosylated (N-linked (GlcNAc...) asparagine). Residues 46–163 (HERIITVSTN…PGFCIHYNIV (118 aa)) enclose the CUB domain. Cystine bridges form between Cys-104–Cys-124, Cys-250–Cys-294, Cys-280–Cys-335, and Cys-287–Cys-337.

Belongs to the PDGF/VEGF growth factor family. As to quaternary structure, homodimer; disulfide-linked. Interacts with PDGFRA homodimers, and with heterodimers formed by PDGFRA and PDGFRB. Interacts (via CUB domain) with PLAT (via kringle domain). In terms of processing, proteolytic removal of the N-terminal CUB domain releasing the core domain is necessary for unmasking the receptor-binding epitopes of the core domain. Cleavage after basic residues in the hinge region (region connecting the CUB and growth factor domains) gives rise to the receptor-binding form. Cleaved by PLAT and PLG. Sumoylated with SUMO1. Post-translationally, N-glycosylated. As to expression, expressed in the fallopian tube, vascular smooth muscle cells in kidney, breast and colon and in visceral smooth muscle of the gastrointestinal tract. Highly expressed in retinal pigment epithelia. Expressed in medulloblastoma. In the kidney, constitutively expressed in parietal epithelial cells of Bowman's capsule, tubular epithelial cells and in arterial endothelial cells (at protein level). Highly expressed in the platelets, prostate, testis and uterus. Higher expression is observed in uterine leiomyomata. Weaker expression in the spleen, thymus, heart, pancreas, liver, ovary cells and small intestine, and negligible expression in the colon and peripheral blood leukocytes.

The protein localises to the cytoplasm. Its subcellular location is the cytosol. It localises to the secreted. The protein resides in the nucleus. It is found in the cytoplasmic granule. The protein localises to the cell membrane. In terms of biological role, growth factor that plays an essential role in the regulation of embryonic development, cell proliferation, cell migration, survival and chemotaxis. Potent mitogen and chemoattractant for cells of mesenchymal origin. Required for normal skeleton formation during embryonic development, especially for normal development of the craniofacial skeleton and for normal development of the palate. Required for normal skin morphogenesis during embryonic development. Plays an important role in wound healing, where it appears to be involved in three stages: inflammation, proliferation and remodeling. Plays an important role in angiogenesis and blood vessel development. Involved in fibrotic processes, in which transformation of interstitial fibroblasts into myofibroblasts plus collagen deposition occurs. The CUB domain has mitogenic activity in coronary artery smooth muscle cells, suggesting a role beyond the maintenance of the latency of the PDGF domain. In the nucleus, PDGFC seems to have additional function. This is Platelet-derived growth factor C (PDGFC) from Homo sapiens (Human).